The following is a 505-amino-acid chain: 2,3-bisphosphoglycerate-independent phosphoglycerate mutase (505 aa).

Mn(2+) is bound by residues Asp-11 and Ser-61. The active-site Phosphoserine intermediate is the Ser-61. Residues His-122, 152-153 (RD), Arg-184, Arg-190, 258-261 (RPDR), and Lys-331 contribute to the substrate site. Positions 396, 400, 437, 438, and 455 each coordinate Mn(2+).

Belongs to the BPG-independent phosphoglycerate mutase family. In terms of assembly, monomer. Mn(2+) serves as cofactor.

The enzyme catalyses (2R)-2-phosphoglycerate = (2R)-3-phosphoglycerate. Its pathway is carbohydrate degradation; glycolysis; pyruvate from D-glyceraldehyde 3-phosphate: step 3/5. Its function is as follows. Catalyzes the interconversion of 2-phosphoglycerate and 3-phosphoglycerate. The protein is 2,3-bisphosphoglycerate-independent phosphoglycerate mutase of Mesomycoplasma hyopneumoniae (strain 7448) (Mycoplasma hyopneumoniae).